The chain runs to 509 residues: Protein disulfide-isomerase (509 aa).

An N-terminal signal peptide occupies residues 1 to 19 (MLSRSLLCLALAWVARVGA). Positions 20–136 (DAPEEEDNVL…IVNWLKKRTG (117 aa)) constitute a Thioredoxin 1 domain. Catalysis depends on nucleophile residues Cys55 and Cys58. The cysteines at positions 55 and 58 are disulfide-linked. N6-acetyllysine is present on Lys202. An N6-succinyllysine mark is found at Lys224 and Lys273. 2 positions are modified to phosphoserine: Ser333 and Ser359. Residues 335 to 477 (ELTAEKITEF…FKKFLESGGQ (143 aa)) form the Thioredoxin 2 domain. Residues Cys399 and Cys402 each act as nucleophile in the active site. Cys399 and Cys402 form a disulfide bridge. Ser429 is subject to Phosphoserine. Residues 473-509 (ESGGQDGAGDDDDVDLEEALEPDMEEDDDQKAVKDEL) form a disordered region. Residues 480–501 (AGDDDDVDLEEALEPDMEEDDD) are compositionally biased toward acidic residues. Residues 506 to 509 (KDEL) carry the Prevents secretion from ER motif.

Belongs to the protein disulfide isomerase family. As to quaternary structure, heterodimer; heterodimerizes with the protein microsomal triglyceride transfer MTTP. Homodimer. Homodimer. Monomers and homotetramers may also occur. Interacts with P4HA2, forming a heterotetramer consisting of 2 alpha subunits (P4HA2) and 2 beta (P4HB), where P4HB plays the role of a structural subunit; this tetramer catalyzes the formation of 4-hydroxyproline in collagen. Also constitutes the structural subunit of the microsomal triacylglycerol transfer protein MTTP in mammalian cells. Stabilizes both enzymes and retain them in the ER without contributing to the catalytic activity. Binds UBQLN1. Interacts with ERO1B. Interacts with ILDR2. Interacts with ERN1/IRE1A (via N-terminus); the interaction is enhanced by phosphorylation of P4HB by FAM20C in response to endoplasmic reticulum stress and results in attenuation of ERN1 activity. Post-translationally, phosphorylation of Ser-359 by FAM20C is induced by endoplasmic reticulum stress and results in a functional switch from oxidoreductase to molecular chaperone. It also promotes interaction with ERN1.

The protein resides in the endoplasmic reticulum. Its subcellular location is the endoplasmic reticulum lumen. It localises to the melanosome. The protein localises to the cell membrane. It carries out the reaction Catalyzes the rearrangement of -S-S- bonds in proteins.. This multifunctional protein catalyzes the formation, breakage and rearrangement of disulfide bonds. At the cell surface, seems to act as a reductase that cleaves disulfide bonds of proteins attached to the cell. May therefore cause structural modifications of exofacial proteins. Inside the cell, seems to form/rearrange disulfide bonds of nascent proteins. At high concentrations and following phosphorylation by FAM20C, functions as a chaperone that inhibits aggregation of misfolded proteins. At low concentrations, facilitates aggregation (anti-chaperone activity). May be involved with other chaperones in the structural modification of the TG precursor in hormone biogenesis. Also acts as a structural subunit of various enzymes such as prolyl 4-hydroxylase and microsomal triacylglycerol transfer protein MTTP. Receptor for LGALS9; the interaction retains P4HB at the cell surface of Th2 T helper cells, increasing disulfide reductase activity at the plasma membrane, altering the plasma membrane redox state and enhancing cell migration. The chain is Protein disulfide-isomerase (P4HB) from Cricetulus griseus (Chinese hamster).